The primary structure comprises 377 residues: Actin-related protein T2 (377 aa).

The protein belongs to the actin family.

It localises to the cytoplasm. Its subcellular location is the cytoskeleton. The chain is Actin-related protein T2 (ACTRT2) from Homo sapiens (Human).